The following is a 205-amino-acid chain: Thymidylate kinase (205 aa).

An ATP-binding site is contributed by 7–14 (GIDGSGKT).

It belongs to the thymidylate kinase family.

The enzyme catalyses dTMP + ATP = dTDP + ADP. In terms of biological role, phosphorylation of dTMP to form dTDP in both de novo and salvage pathways of dTTP synthesis. The protein is Thymidylate kinase of Wolbachia pipientis subsp. Culex pipiens (strain wPip).